The primary structure comprises 446 residues: Deoxyguanosinetriphosphate triphosphohydrolase-like protein (446 aa).

The disordered stretch occupies residues 1–28 (MSSSVWQERRHGEDKQRRNDHRSPFQRD). The segment covering 7–28 (QERRHGEDKQRRNDHRSPFQRD) has biased composition (basic and acidic residues). The region spanning 59–252 (RLTHSLEVSQ…MELADDIAYA (194 aa)) is the HD domain.

Belongs to the dGTPase family. Type 2 subfamily.

The sequence is that of Deoxyguanosinetriphosphate triphosphohydrolase-like protein from Shewanella sp. (strain MR-7).